Reading from the N-terminus, the 235-residue chain is RAD9, HUS1, RAD1-interacting nuclear orphan protein 1 (235 aa).

Ser50 is modified (phosphoserine). The RAD1-binding motif signature appears at 54–60 (SWVLPQF). Residues 66–106 (SRFPTHRKHHRDQARHPTRRSTCKFPRLTFESPESSSSETL) are disordered. The span at 69–87 (PTHRKHHRDQARHPTRRST) shows a compositional bias: basic residues. Over residues 96–106 (ESPESSSSETL) the composition is skewed to low complexity. A D-box motif is present at residues 123-130 (RRPLVPLF). Positions 156 to 198 (QTPGSSVREDPISPDQKENSLPSCILGPRTPRTPEPGPVLVKD) are disordered. Residues 162-173 (VREDPISPDQKE) are compositionally biased toward basic and acidic residues. The KEN box motif lies at 171 to 175 (QKENS).

In terms of assembly, interacts (when phosphorylated by PLK1) with POLQ; promoting POLQ recruitment to DNA damage sites. Interacts with RAD1; interaction is direct and promotes association with the 9-1-1 (RAD9-RAD1-HUS1) complex. Interacts with RAD18. Interacts with TOPBP1. Interacts with UBE2N. Phosphorylated at Ser-50 by PLK1, promoting interaction with polymerase theta (POLQ). In terms of processing, ubiquitinated and degraded by the APC/C complex upon mitotic exit.

The protein localises to the nucleus. Its subcellular location is the chromosome. Involved in microhomology-mediated end-joining (MMEJ) DNA repair by promoting recruitment of polymerase theta (POLQ) to DNA damage sites during mitosis. MMEJ is an alternative non-homologous end-joining (NHEJ) machinery that takes place during mitosis to repair double-strand breaks in DNA that originate in S-phase. Accumulates in M-phase; following phosphorylation by PLK1, interacts with POLQ, enabling its recruitment to double-strand breaks for subsequent repair. Also involved in the DNA damage response (DDR) signaling in response to genotoxic stresses such as ionizing radiation (IR) during the S phase. Recruited to sites of DNA damage through interaction with the 9-1-1 cell-cycle checkpoint response complex and TOPBP1 in a ATR-dependent manner. Required for the progression of the G1 to S phase transition. Plays a role in the stimulation of CHEK1 phosphorylation. This is RAD9, HUS1, RAD1-interacting nuclear orphan protein 1 (Rhno1) from Rattus norvegicus (Rat).